The primary structure comprises 174 residues: MALLEIIHYPSKILRTISKEVVSFDSKLHQQLDDMHETMIASEGIGLAAIQVGLPLRMLIINLPQEDGVQHKEDCLEIINPKWIETKGSMMYKEGCLSVPGFYEEVERFEKVKIEYQNRFAEVKILEASELLAVAIQHEIDHLNGVLFVDKLSILKRKKFEKELKELQKKQKRE.

Cys-96 and His-138 together coordinate Fe cation. The active site involves Glu-139. A Fe cation-binding site is contributed by His-142.

It belongs to the polypeptide deformylase family. The cofactor is Fe(2+).

The enzyme catalyses N-terminal N-formyl-L-methionyl-[peptide] + H2O = N-terminal L-methionyl-[peptide] + formate. Removes the formyl group from the N-terminal Met of newly synthesized proteins. Requires at least a dipeptide for an efficient rate of reaction. N-terminal L-methionine is a prerequisite for activity but the enzyme has broad specificity at other positions. This chain is Peptide deformylase, found in Helicobacter pylori (strain P12).